Reading from the N-terminus, the 284-residue chain is 3-methyl-2-oxobutanoate hydroxymethyltransferase 2 (284 aa).

Mg(2+)-binding residues include D49 and D88. 3-methyl-2-oxobutanoate-binding positions include 49-50 (DS), D88, and K118. E120 is a Mg(2+) binding site. The Proton acceptor role is filled by E187.

This sequence belongs to the PanB family. As to quaternary structure, homodecamer; pentamer of dimers. Mg(2+) serves as cofactor.

The protein resides in the cytoplasm. It carries out the reaction 3-methyl-2-oxobutanoate + (6R)-5,10-methylene-5,6,7,8-tetrahydrofolate + H2O = 2-dehydropantoate + (6S)-5,6,7,8-tetrahydrofolate. It participates in cofactor biosynthesis; (R)-pantothenate biosynthesis; (R)-pantoate from 3-methyl-2-oxobutanoate: step 1/2. Catalyzes the reversible reaction in which hydroxymethyl group from 5,10-methylenetetrahydrofolate is transferred onto alpha-ketoisovalerate to form ketopantoate. The chain is 3-methyl-2-oxobutanoate hydroxymethyltransferase 2 from Burkholderia cenocepacia (strain HI2424).